The following is a 95-amino-acid chain: Co-chaperonin GroES (95 aa).

The protein belongs to the GroES chaperonin family. In terms of assembly, heptamer of 7 subunits arranged in a ring. Interacts with the chaperonin GroEL.

It is found in the cytoplasm. In terms of biological role, together with the chaperonin GroEL, plays an essential role in assisting protein folding. The GroEL-GroES system forms a nano-cage that allows encapsulation of the non-native substrate proteins and provides a physical environment optimized to promote and accelerate protein folding. GroES binds to the apical surface of the GroEL ring, thereby capping the opening of the GroEL channel. In Chlorobium phaeobacteroides (strain DSM 266 / SMG 266 / 2430), this protein is Co-chaperonin GroES.